We begin with the raw amino-acid sequence, 62 residues long: Temporin-La (62 aa).

An N-terminal signal peptide occupies residues 1 to 22 (MFPLKKSLLLLFFLGTINLSFC). The propeptide occupies 23–47 (EEERDVDQDERRDDPGERNVQVEKR). Leucine 60 is modified (leucine amide).

Belongs to the frog skin active peptide (FSAP) family. Temporin subfamily. In terms of tissue distribution, expressed by the skin glands.

The protein resides in the secreted. It localises to the target cell membrane. In terms of biological role, antimicrobial peptide with amphipathic alpha-helical structure that acts against both Gram-positive and Gram-negative bacteria and the fungus Candida albicans. Is active against S.aureus ATCC 25923 (MIC=2.5 ug/ml), S.suis 2 CVCC 606 (MIC=15.6 ug/ml), Salmonella ATCC 20020 (MIC=15.6 ug/ml), P.aeruginosa ATCC 227853 (MIC=60 ug/ml), and C.albicans ATCC10231 (MIC=31.25 ug/ml). Is not active against B.subtilis ADB403, E.coli ATCC 25922, and K.pneumoniae ATCC 700603. Also shows a strong antitumor activity, but no hemolytic activity. This is Temporin-La from Aquarana catesbeiana (American bullfrog).